The sequence spans 160 residues: 3-dehydroquinate dehydratase (160 aa).

Residue Y22 is the Proton acceptor of the active site. N73, H79, and D86 together coordinate substrate. The active-site Proton donor is H99. Substrate-binding positions include 100–101 (IS) and R110.

This sequence belongs to the type-II 3-dehydroquinase family. As to quaternary structure, homododecamer.

The catalysed reaction is 3-dehydroquinate = 3-dehydroshikimate + H2O. Its pathway is metabolic intermediate biosynthesis; chorismate biosynthesis; chorismate from D-erythrose 4-phosphate and phosphoenolpyruvate: step 3/7. In terms of biological role, catalyzes a trans-dehydration via an enolate intermediate. The polypeptide is 3-dehydroquinate dehydratase (Campylobacter lari (strain RM2100 / D67 / ATCC BAA-1060)).